A 529-amino-acid polypeptide reads, in one-letter code: Ribonuclease Y (529 aa).

A helical membrane pass occupies residues 4 to 24 (GLIYISLEVLVACLITALVMY). The KH domain maps to 216–297 (LTTRIALPCS…NRIEEVYHRV (82 aa)). Residues 342–435 (ALQHSKEVAL…VCAADALSAG (94 aa)) form the HD domain.

The protein belongs to the RNase Y family.

The protein resides in the cell membrane. In terms of biological role, endoribonuclease that initiates mRNA decay. The polypeptide is Ribonuclease Y (Helicobacter pylori (strain ATCC 700392 / 26695) (Campylobacter pylori)).